The sequence spans 220 residues: Homeobox-leucine zipper protein ATHB-21 (220 aa).

Residues 26–48 (VPQQGGEAKPTRRRKRKSKSVVV) form a disordered region. Positions 58-117 (GWFRKRKLSDEQVRMLEISFEDDHKLESERKDRLASELGLDPRQVAVWFQNRRARWKNKR) form a DNA-binding region, homeobox. The tract at residues 118–146 (VEDEYTKLKNAYETTVVEKCRLDSEVIHL) is leucine-zipper.

Belongs to the HD-ZIP homeobox family. Class I subfamily. In terms of tissue distribution, widely expressed.

The protein localises to the nucleus. Its function is as follows. Probable transcription factor. This is Homeobox-leucine zipper protein ATHB-21 (ATHB-21) from Arabidopsis thaliana (Mouse-ear cress).